We begin with the raw amino-acid sequence, 628 residues long: Chaperone protein HtpG (628 aa).

Residues M1–R334 are a; substrate-binding. The segment at E335–K550 is b. The segment at M551–G628 is c.

This sequence belongs to the heat shock protein 90 family. Homodimer.

Its subcellular location is the cytoplasm. In terms of biological role, molecular chaperone. Has ATPase activity. This Rhodopseudomonas palustris (strain BisB5) protein is Chaperone protein HtpG.